Reading from the N-terminus, the 302-residue chain is GTPase Era (302 aa).

The Era-type G domain maps to 8 to 175; that stretch reads HSGFVAIIGR…LTTLKGQLPE (168 aa). Positions 16-23 are G1; sequence GRPNVGKS. Position 16 to 23 (16 to 23) interacts with GTP; the sequence is GRPNVGKS. Positions 42 to 46 are G2; it reads QTTRN. Residues 63 to 66 form a G3 region; the sequence is DTPG. GTP-binding positions include 63 to 67 and 125 to 128; these read DTPGI and NKID. The G4 stretch occupies residues 125-128; it reads NKID. The segment at 154 to 156 is G5; the sequence is ISA. Residues 206–283 enclose the KH type-2 domain; it reads TRQEVPHSTA…YLELWVKVQE (78 aa).

The protein belongs to the TRAFAC class TrmE-Era-EngA-EngB-Septin-like GTPase superfamily. Era GTPase family. Monomer.

It localises to the cytoplasm. Its subcellular location is the cell membrane. In terms of biological role, an essential GTPase that binds both GDP and GTP, with rapid nucleotide exchange. Plays a role in 16S rRNA processing and 30S ribosomal subunit biogenesis and possibly also in cell cycle regulation and energy metabolism. This chain is GTPase Era, found in Lactiplantibacillus plantarum (strain ATCC BAA-793 / NCIMB 8826 / WCFS1) (Lactobacillus plantarum).